Consider the following 304-residue polypeptide: Non-specific ribonucleoside hydrolase RihC (304 aa).

The active site involves H233.

Belongs to the IUNH family. RihC subfamily.

In terms of biological role, hydrolyzes both purine and pyrimidine ribonucleosides with a broad-substrate specificity. This chain is Non-specific ribonucleoside hydrolase RihC, found in Escherichia fergusonii (strain ATCC 35469 / DSM 13698 / CCUG 18766 / IAM 14443 / JCM 21226 / LMG 7866 / NBRC 102419 / NCTC 12128 / CDC 0568-73).